Consider the following 313-residue polypeptide: Hsp90 co-chaperone Cdc37-like 1 (313 aa).

Belongs to the CDC37 family. Forms complexes with Hsp70 and Hsp90.

It is found in the cytoplasm. Functionally, co-chaperone that binds to numerous proteins and promotes their interaction with Hsp70 and Hsp90. The sequence is that of Hsp90 co-chaperone Cdc37-like 1 (cdc37l1) from Danio rerio (Zebrafish).